The chain runs to 200 residues: Recombination protein RecR (200 aa).

Residues 57-72 (CEHCRTFTEEDICSIC) form a C4-type zinc finger. In terms of domain architecture, Toprim spans 81–176 (RLLCVVEMPA…KVSRIAHGIP (96 aa)).

This sequence belongs to the RecR family.

Functionally, may play a role in DNA repair. It seems to be involved in an RecBC-independent recombinational process of DNA repair. It may act with RecF and RecO. This chain is Recombination protein RecR, found in Mannheimia succiniciproducens (strain KCTC 0769BP / MBEL55E).